Here is a 130-residue protein sequence, read N- to C-terminus: Iron-sulfur cluster insertion protein ErpA (130 aa).

The iron-sulfur cluster site is built by C46, C116, and C118.

This sequence belongs to the HesB/IscA family. Homodimer. Requires iron-sulfur cluster as cofactor.

Functionally, required for insertion of 4Fe-4S clusters for at least IspG. The sequence is that of Iron-sulfur cluster insertion protein ErpA from Legionella pneumophila (strain Paris).